The chain runs to 396 residues: Methylthioribose kinase (396 aa).

ATP-binding positions include Asn-44, Lys-61, and 115 to 117; that span reads EDL. Asp-233 lines the substrate pocket. 250–252 provides a ligand contact to ATP; it reads DPE. Position 340 (Arg-340) interacts with substrate.

Belongs to the methylthioribose kinase family. In terms of assembly, homodimer.

It carries out the reaction 5-(methylsulfanyl)-D-ribose + ATP = 5-(methylsulfanyl)-alpha-D-ribose 1-phosphate + ADP + H(+). It participates in amino-acid biosynthesis; L-methionine biosynthesis via salvage pathway; S-methyl-5-thio-alpha-D-ribose 1-phosphate from S-methyl-5'-thioadenosine (hydrolase route): step 2/2. Its function is as follows. Catalyzes the phosphorylation of methylthioribose into methylthioribose-1-phosphate. In Geobacillus kaustophilus (strain HTA426), this protein is Methylthioribose kinase.